The following is a 172-amino-acid chain: 3-hydroxydecanoyl-[acyl-carrier-protein] dehydratase (172 aa).

Residue His71 is part of the active site.

Belongs to the thioester dehydratase family. FabA subfamily. In terms of assembly, homodimer.

It is found in the cytoplasm. It catalyses the reaction a (3R)-hydroxyacyl-[ACP] = a (2E)-enoyl-[ACP] + H2O. It carries out the reaction (3R)-hydroxydecanoyl-[ACP] = (2E)-decenoyl-[ACP] + H2O. The catalysed reaction is (2E)-decenoyl-[ACP] = (3Z)-decenoyl-[ACP]. It participates in lipid metabolism; fatty acid biosynthesis. Its function is as follows. Necessary for the introduction of cis unsaturation into fatty acids. Catalyzes the dehydration of (3R)-3-hydroxydecanoyl-ACP to E-(2)-decenoyl-ACP and then its isomerization to Z-(3)-decenoyl-ACP. Can catalyze the dehydratase reaction for beta-hydroxyacyl-ACPs with saturated chain lengths up to 16:0, being most active on intermediate chain length. In Blochmanniella floridana, this protein is 3-hydroxydecanoyl-[acyl-carrier-protein] dehydratase.